Consider the following 715-residue polypeptide: Transcription factor MST12 (715 aa).

The span at 214–224 (SSSFNAQQVSF) shows a compositional bias: low complexity. 3 disordered regions span residues 214–243 (SSSFNAQQVSFPPSQSTSPVMRAMDSMPPP), 439–469 (AAHRPSDLRRSVSASVGPVAEGDESLDNSPP), and 518–539 (PMPSEDMTSPMDDRSRPMAQGG). 2 C2H2-type zinc fingers span residues 564–588 (HSCPIPTCGRLFKRLEHLKRHVRTH) and 594–616 (YICPYCSKAFSRSDNLAQHKRTH). The disordered stretch occupies residues 632 to 691 (EEEYSGDDHLGSLEEASPTSEGGYVTSSLNSAMAHSNTSQHPGSNAVSPNPGPMSHAPTY). Polar residues predominate over residues 648 to 679 (SPTSEGGYVTSSLNSAMAHSNTSQHPGSNAVS).

Belongs to the STE12 transcription factor family.

The protein localises to the nucleus. Transcription factor that may function downstream of PMK1 to regulate genes involved in infectious hyphae growth. Is not essential for vegetative growth, conidiation or appressorium formation. May be involved in the regulation of the expression of the cell surface sensor MSB2. The sequence is that of Transcription factor MST12 from Pyricularia oryzae (strain 70-15 / ATCC MYA-4617 / FGSC 8958) (Rice blast fungus).